A 907-amino-acid chain; its full sequence is Protein translocase subunit SecA (907 aa).

Residues glutamine 87, 105–109, and aspartate 512 contribute to the ATP site; that span reads GEGKT. Residues 862–885 are disordered; the sequence is AENQLDDGHSSDQNHSPMVRDERK. A compositionally biased stretch (basic and acidic residues) spans 867–885; that stretch reads DDGHSSDQNHSPMVRDERK. Residues cysteine 892, cysteine 894, cysteine 903, and histidine 904 each coordinate Zn(2+).

This sequence belongs to the SecA family. In terms of assembly, monomer and homodimer. Part of the essential Sec protein translocation apparatus which comprises SecA, SecYEG and auxiliary proteins SecDF-YajC and YidC. Zn(2+) is required as a cofactor.

It is found in the cell inner membrane. It localises to the cytoplasm. It carries out the reaction ATP + H2O + cellular proteinSide 1 = ADP + phosphate + cellular proteinSide 2.. Functionally, part of the Sec protein translocase complex. Interacts with the SecYEG preprotein conducting channel. Has a central role in coupling the hydrolysis of ATP to the transfer of proteins into and across the cell membrane, serving both as a receptor for the preprotein-SecB complex and as an ATP-driven molecular motor driving the stepwise translocation of polypeptide chains across the membrane. This is Protein translocase subunit SecA from Aliivibrio salmonicida (strain LFI1238) (Vibrio salmonicida (strain LFI1238)).